Consider the following 227-residue polypeptide: Transmembrane emp24 domain-containing protein 4 (227 aa).

Positions 1 to 29 (MAGVGVGPLQGMVRFGLLVLTVCAACARG) are cleaved as a signal peptide. The Lumenal portion of the chain corresponds to 30 to 194 (LYFHIGETEK…RLTSESTNQR (165 aa)). The region spanning 39–137 (KRCFIEEIPD…KLRVHLDIQV (99 aa)) is the GOLD domain. A glycan (N-linked (GlcNAc...) asparagine) is linked at Asn117. The stretch at 147-176 (IAAKDKLTELQLRARQLLDQVEQIQKEQDY) forms a coiled coil. Residues 195-212 (VLWWSIAQTVILILTGIW) form a helical membrane-spanning segment. Residues 213 to 227 (QMRHLKSFFEAKKLV) are Cytoplasmic-facing. The COPII vesicle coat-binding signature appears at 220–221 (FF). The short motif at 220-227 (FFEAKKLV) is the COPI vesicle coat-binding element.

The protein belongs to the EMP24/GP25L family.

The protein localises to the endoplasmic reticulum membrane. Functionally, involved in vesicular protein trafficking, mainly in the early secretory pathway. Involved in the maintenance of the Golgi apparatus. Appears to play a role in the biosynthesis of secreted cargo including processing. Involved in endoplasmic reticulum stress response. May play a role in the regulation of heat-shock response and apoptosis. The sequence is that of Transmembrane emp24 domain-containing protein 4 (Tmed4) from Mus musculus (Mouse).